The following is a 182-amino-acid chain: MRHRILTLLLGLAVLVTAGCGFHLRGTTQVPAELKKLQITSSDPYGPLARSVRQQLRLNNVTILEDGSADVPVLKLIDSSENKDTVSVFQDGKAAERQLTLNVNAQVIMPDGSVYPLRSRVDRSFFDNPLEALAKDAENEIINQEMREQAARRLVRQLLTVHNAEKQKAREKQVGQQAAQAQ.

A signal peptide spans 1 to 19; the sequence is MRHRILTLLLGLAVLVTAG. A lipid anchor (N-palmitoyl cysteine) is attached at C20. C20 is lipidated: S-diacylglycerol cysteine.

The protein belongs to the LptE lipoprotein family. As to quaternary structure, component of the lipopolysaccharide transport and assembly complex. Interacts with LptD.

It localises to the cell outer membrane. Together with LptD, is involved in the assembly of lipopolysaccharide (LPS) at the surface of the outer membrane. Required for the proper assembly of LptD. Binds LPS and may serve as the LPS recognition site at the outer membrane. This chain is LPS-assembly lipoprotein LptE, found in Photorhabdus laumondii subsp. laumondii (strain DSM 15139 / CIP 105565 / TT01) (Photorhabdus luminescens subsp. laumondii).